We begin with the raw amino-acid sequence, 429 residues long: MKKTLLALLIASVMQSALAAPATPVREVDRIVAVVNKNVITWQELQARVNEAIKQLEAQKVAPPPREVLERQVLEQMITEEVQLQYAASGGLRIEDAAVDQAVANLAKQNKLSEAGLKAQLAKDGITLDRLRADIRRELTISRLRDSEVASRVNVSDSEVDQAMKSAQSANRTEYHLASILVAVPERADAKQIDQLSQKVHKAQADLAAGQPFAKVSAAYSDAPNALKGGDMGWRSATSLPQEFVQLLEQMKVGADTDVIRTQQGFFIFKLVDKRSGGAPMMVEQYHPRHILIRTNEAVSEADAKARIDQVRDRIMRGAKFADMAKLYSEDGSNAKGGDLGWVNMGDLVPEFEKAMVSLPIGQVSQPVRTPFGWHLILVEGKRNQDVSSDHEKMAVKQQIRARKMEQAYTDWVRQLRDSAFVEEHLDEK.

The signal sequence occupies residues 1–19 (MKKTLLALLIASVMQSALA). 2 PpiC domains span residues 172–273 (RTEY…KLVD) and 283–381 (VEQY…LVEG).

It is found in the periplasm. The enzyme catalyses [protein]-peptidylproline (omega=180) = [protein]-peptidylproline (omega=0). Chaperone involved in the correct folding and assembly of outer membrane proteins. Recognizes specific patterns of aromatic residues and the orientation of their side chains, which are found more frequently in integral outer membrane proteins. May act in both early periplasmic and late outer membrane-associated steps of protein maturation. This chain is Chaperone SurA, found in Chromobacterium violaceum (strain ATCC 12472 / DSM 30191 / JCM 1249 / CCUG 213 / NBRC 12614 / NCIMB 9131 / NCTC 9757 / MK).